The primary structure comprises 750 residues: Photosystem I P700 chlorophyll a apoprotein A1 (750 aa).

Helical transmembrane passes span 70-93, 156-179, 195-219, 291-309, 346-369, 385-411, 433-455, and 531-549; these read VFSA…FHGA, LYCT…FHYH, LNHH…HVSL, TAHH…GHMY, WHAQ…HHMY, LSLF…IFMV, AIVS…LYIH, and FLVH…LILL. Cys573 and Cys582 together coordinate [4Fe-4S] cluster. Transmembrane regions (helical) follow at residues 589-610 and 664-686; these read HVFL…HFSW and LSAY…MFLF. Position 675 (His675) interacts with chlorophyll a'. Residues Met683 and Tyr691 each contribute to the chlorophyll a site. Trp692 is a binding site for phylloquinone. The helical transmembrane segment at 724 to 744 threads the bilayer; sequence AVGVAHYLLGGIVTTWAFFLA.

It belongs to the PsaA/PsaB family. The PsaA/B heterodimer binds the P700 chlorophyll special pair and subsequent electron acceptors. PSI consists of a core antenna complex that captures photons, and an electron transfer chain that converts photonic excitation into a charge separation. The eukaryotic PSI reaction center is composed of at least 11 subunits. P700 is a chlorophyll a/chlorophyll a' dimer, A0 is one or more chlorophyll a, A1 is one or both phylloquinones and FX is a shared 4Fe-4S iron-sulfur center. is required as a cofactor.

It is found in the plastid. The protein resides in the chloroplast thylakoid membrane. The enzyme catalyses reduced [plastocyanin] + hnu + oxidized [2Fe-2S]-[ferredoxin] = oxidized [plastocyanin] + reduced [2Fe-2S]-[ferredoxin]. Its function is as follows. PsaA and PsaB bind P700, the primary electron donor of photosystem I (PSI), as well as the electron acceptors A0, A1 and FX. PSI is a plastocyanin-ferredoxin oxidoreductase, converting photonic excitation into a charge separation, which transfers an electron from the donor P700 chlorophyll pair to the spectroscopically characterized acceptors A0, A1, FX, FA and FB in turn. Oxidized P700 is reduced on the lumenal side of the thylakoid membrane by plastocyanin. This Pinus koraiensis (Korean pine) protein is Photosystem I P700 chlorophyll a apoprotein A1.